A 495-amino-acid polypeptide reads, in one-letter code: Prenylcysteine oxidase 1-like (495 aa).

An N-terminal signal peptide occupies residues 1 to 22; the sequence is MARAAPLLAVLATVLTTAAAGG. 2 N-linked (GlcNAc...) asparagine glycosylation sites follow: asparagine 185 and asparagine 343.

The protein belongs to the prenylcysteine oxidase family. It depends on FAD as a cofactor.

The protein localises to the secreted. Functionally, likely to have oxidoreductase activity. Required in the mevalonate pathway to regulate prenylation and enhances the bactericidal activity of neutrophils. In Mus musculus (Mouse), this protein is Prenylcysteine oxidase 1-like (Pcyox1l).